Here is a 643-residue protein sequence, read N- to C-terminus: Phosphomethylpyrimidine synthase (643 aa).

Substrate contacts are provided by residues N248, M277, Y306, H342, 362–364 (SRG), 403–406 (DGLR), and E442. Zn(2+) is bound at residue H446. Substrate is bound at residue Y469. H510 contributes to the Zn(2+) binding site. [4Fe-4S] cluster is bound by residues C590, C593, and C598.

It belongs to the ThiC family. As to quaternary structure, homodimer. The cofactor is [4Fe-4S] cluster.

The catalysed reaction is 5-amino-1-(5-phospho-beta-D-ribosyl)imidazole + S-adenosyl-L-methionine = 4-amino-2-methyl-5-(phosphooxymethyl)pyrimidine + CO + 5'-deoxyadenosine + formate + L-methionine + 3 H(+). It participates in cofactor biosynthesis; thiamine diphosphate biosynthesis. In terms of biological role, catalyzes the synthesis of the hydroxymethylpyrimidine phosphate (HMP-P) moiety of thiamine from aminoimidazole ribotide (AIR) in a radical S-adenosyl-L-methionine (SAM)-dependent reaction. This Burkholderia ambifaria (strain MC40-6) protein is Phosphomethylpyrimidine synthase.